The chain runs to 78 residues: DNA import protein CedA1 (78 aa).

Helical transmembrane passes span 12-32 (STVT…GWAL) and 53-73 (AIIA…ISYI).

In terms of assembly, forms a complex composed of CedA, CedA1 and CedA2.

The protein localises to the cell membrane. Functionally, part of the Ced system, which is involved in DNA import. This is DNA import protein CedA1 from Sulfolobus acidocaldarius (strain ATCC 33909 / DSM 639 / JCM 8929 / NBRC 15157 / NCIMB 11770).